Consider the following 164-residue polypeptide: Ecotin (164 aa).

Residues 1–20 (MKMFVPAVVFAALASASAWA) form the signal peptide. Cysteine 72 and cysteine 109 form a disulfide bridge.

Belongs to the protease inhibitor I11 (ecotin) family. In terms of assembly, homodimer.

Its subcellular location is the periplasm. Functionally, general inhibitor of pancreatic serine proteases: inhibits chymotrypsin, trypsin, elastases, factor X, kallikrein as well as a variety of other proteases. This is Ecotin from Salmonella typhi.